A 114-amino-acid chain; its full sequence is T cell receptor beta variable 5-8 (114 aa).

The signal sequence occupies residues 1-21 (MGPRLLFWALLCLLGTGPVEA). One can recognise an Ig-like domain in the interval 22-114 (GVTQSPTHLI…SALYLCASSL (93 aa)). Cysteines 42 and 110 form a disulfide. The N-linked (GlcNAc...) asparagine glycan is linked to asparagine 90.

Alpha-beta TR is a heterodimer composed of an alpha and beta chain; disulfide-linked. The alpha-beta TR is associated with the transmembrane signaling CD3 coreceptor proteins to form the TR-CD3 (TcR or TCR). The assembly of alpha-beta TR heterodimers with CD3 occurs in the endoplasmic reticulum where a single alpha-beta TR heterodimer associates with one CD3D-CD3E heterodimer, one CD3G-CD3E heterodimer and one CD247 homodimer forming a stable octameric structure. CD3D-CD3E and CD3G-CD3E heterodimers preferentially associate with TR alpha and TR beta chains, respectively. The association of the CD247 homodimer is the last step of TcR assembly in the endoplasmic reticulum and is required for transport to the cell surface.

Its subcellular location is the cell membrane. V region of the variable domain of T cell receptor (TR) beta chain that participates in the antigen recognition. Alpha-beta T cell receptors are antigen specific receptors which are essential to the immune response and are present on the cell surface of T lymphocytes. Recognize peptide-major histocompatibility (MH) (pMH) complexes that are displayed by antigen presenting cells (APC), a prerequisite for efficient T cell adaptive immunity against pathogens. Binding of alpha-beta TR to pMH complex initiates TR-CD3 clustering on the cell surface and intracellular activation of LCK that phosphorylates the ITAM motifs of CD3G, CD3D, CD3E and CD247 enabling the recruitment of ZAP70. In turn ZAP70 phosphorylates LAT, which recruits numerous signaling molecules to form the LAT signalosome. The LAT signalosome propagates signal branching to three major signaling pathways, the calcium, the mitogen-activated protein kinase (MAPK) kinase and the nuclear factor NF-kappa-B (NF-kB) pathways, leading to the mobilization of transcription factors that are critical for gene expression and essential for T cell growth and differentiation. The T cell repertoire is generated in the thymus, by V-(D)-J rearrangement. This repertoire is then shaped by intrathymic selection events to generate a peripheral T cell pool of self-MH restricted, non-autoaggressive T cells. Post-thymic interaction of alpha-beta TR with the pMH complexes shapes TR structural and functional avidity. In Homo sapiens (Human), this protein is T cell receptor beta variable 5-8.